Consider the following 164-residue polypeptide: uncharacterized protein (164 aa).

Transmembrane regions (helical) follow at residues 11-31 and 51-71; these read FYVN…PSLL and CQQY…LVLV.

The protein localises to the membrane. This is an uncharacterized protein from Saccharomyces cerevisiae (strain ATCC 204508 / S288c) (Baker's yeast).